The following is a 130-amino-acid chain: Small ribosomal subunit protein uS11 (130 aa).

It belongs to the universal ribosomal protein uS11 family. As to quaternary structure, part of the 30S ribosomal subunit. Interacts with proteins S7 and S18. Binds to IF-3.

Functionally, located on the platform of the 30S subunit, it bridges several disparate RNA helices of the 16S rRNA. Forms part of the Shine-Dalgarno cleft in the 70S ribosome. The chain is Small ribosomal subunit protein uS11 from Buchnera aphidicola subsp. Cinara cedri (strain Cc).